Consider the following 488-residue polypeptide: Tetratricopeptide repeat protein 23 (488 aa).

5 TPR repeats span residues 45-78 (LHLCEERAKSYSSSREYKQAIQELVRCVALTRIC), 137-170 (LELFYTLGRALLSLQKFKDASENLIKAERLSKEM), 186-219 (SRIKLSFAQLYQGQKRSKEAFPFYQKALEYTEIT), 228-261 (VQVLRELAGVEQALGLYAAAISHFSRDRLPTPQP), and 398-431 (AETYRALGRADLAQGNNSGAYAKLKKCVQIETFL).

In terms of assembly, associated with the EvC complex composed of EFCAB7, IQCE, EVC2 and EVC.

Its subcellular location is the cell projection. The protein localises to the cilium. Its function is as follows. Participates positively in the ciliary Hedgehog (Hh) signaling. In Mus musculus (Mouse), this protein is Tetratricopeptide repeat protein 23 (Ttc23).